Here is a 63-residue protein sequence, read N- to C-terminus: Omega-conotoxin Eu1.6 (63 aa).

The signal sequence occupies residues 1-21; that stretch reads MGMRMMFTVFLLVVLATTVVS. The propeptide occupies 22–47; sequence FTSDRAPDGRNAAAKAFGLITPTVRK. 2 disulfide bridges follow: Cys-49-Cys-55 and Cys-50-Cys-63. Residues 51 to 53 are ser-Xaa-Pro motif, crucial for potent interaction with nAChR; the sequence is SNP.

This sequence belongs to the conotoxin A superfamily. In terms of tissue distribution, expressed by the venom duct.

Its subcellular location is the secreted. Its function is as follows. This amidated peptide potently and teversibly inhibits Cav2.2/CACNA1B. Steady-state inactivation is enhanced at hyperpolarized membrane potentials. Also shows a weak interaction at alpha-3-beta-4/ CHRNA3-CHRNB4 and alpha-7/CHRNA7 nAChRs subtypes. In vivo, exhibits a potent analgesic activity in rat partial sciatic nerve injury and chronic constriction injury models. The protein is Omega-conotoxin Eu1.6 of Conus eburneus (Ivory cone).